Consider the following 324-residue polypeptide: Glutaminase 2 (324 aa).

The substrate site is built by serine 75, asparagine 127, glutamate 171, asparagine 178, tyrosine 202, tyrosine 254, and valine 272.

It belongs to the glutaminase family. As to quaternary structure, homotetramer.

The catalysed reaction is L-glutamine + H2O = L-glutamate + NH4(+). This Halalkalibacterium halodurans (strain ATCC BAA-125 / DSM 18197 / FERM 7344 / JCM 9153 / C-125) (Bacillus halodurans) protein is Glutaminase 2.